The following is a 219-amino-acid chain: Small ribosomal subunit protein uS2m (219 aa).

This sequence belongs to the universal ribosomal protein uS2 family. Component of the mitochondrial ribosome small subunit.

The protein resides in the mitochondrion. The chain is Small ribosomal subunit protein uS2m (RPS2) from Arabidopsis thaliana (Mouse-ear cress).